The chain runs to 1285 residues: Dermonecrotic toxin (1285 aa).

The helical transmembrane segment at 402-422 (MLVPAVGIPINFALSATALGL) threads the bilayer.

Its subcellular location is the cytoplasm. It localises to the secreted. The protein resides in the host membrane. Its function is as follows. This is a dermonecrotic toxin. This osteolytic toxin, induces bone resorption. Potent mitogen. This toxin is associated with the severe progressive form of the atrophic rhinitis, a major respiratory disease in pigs. This chain is Dermonecrotic toxin (toxA), found in Pasteurella multocida.